The primary structure comprises 62 residues: Large ribosomal subunit protein uL30 (62 aa).

It belongs to the universal ribosomal protein uL30 family. As to quaternary structure, part of the 50S ribosomal subunit.

The protein is Large ribosomal subunit protein uL30 of Kosmotoga olearia (strain ATCC BAA-1733 / DSM 21960 / TBF 19.5.1).